A 174-amino-acid chain; its full sequence is Bifunctional protein PyrR (174 aa).

Substrate-binding positions include 38–39, 95–103, and R128; these read SG and DDVLATGRT. The PRPP-binding signature appears at 91–103; it reads ILLVDDVLATGRT.

It belongs to the purine/pyrimidine phosphoribosyltransferase family. PyrR subfamily.

It catalyses the reaction UMP + diphosphate = 5-phospho-alpha-D-ribose 1-diphosphate + uracil. Regulates the transcription of the pyrimidine nucleotide (pyr) operon in response to exogenous pyrimidines. Functionally, also displays a weak uracil phosphoribosyltransferase activity which is not physiologically significant. The chain is Bifunctional protein PyrR from Ralstonia nicotianae (strain ATCC BAA-1114 / GMI1000) (Ralstonia solanacearum).